We begin with the raw amino-acid sequence, 480 residues long: G-protein coupled receptor seb-2 (480 aa).

The Extracellular portion of the chain corresponds to 1 to 222 (MNPSISTAGA…CMSNGDVEAR (222 aa)). Residue N95 is glycosylated (N-linked (GlcNAc...) asparagine). Residues 223 to 243 (ILAGLLTYSASVIFLIPAVFL) form a helical membrane-spanning segment. Over 244 to 261 (LTLLRPIRCQPMFILHRH) the chain is Cytoplasmic. A helical membrane pass occupies residues 262-282 (LLISCLLYGAFYLITVSLFVV). The Extracellular segment spans residues 283 to 305 (NDAPLSSQVFQNHLFCRLLFSIQ). Residues 306–328 (LRYLRLTNFTWMLAEAVYLWRLL) traverse the membrane as a helical segment. At 329–343 (HTAQHSEGETLRSYK) the chain is on the cytoplasmic side. The helical transmembrane segment at 344–364 (VICWGVPGVITVVYIFVRSLN) threads the bilayer. The Extracellular segment spans residues 365-386 (DDVGMCWIENSTVAWIEWMIIT). A helical transmembrane segment spans residues 387–407 (PSLLAMGVNLLLLGLIVYILV). Topologically, residues 408–423 (KKLRCDPHLERIQYRK) are cytoplasmic. The chain crosses the membrane as a helical span at residues 424 to 444 (AVRGALMLIPVFGVQQLLTIY). The Extracellular portion of the chain corresponds to 445-480 (RFRNVCLIYRLLHKSFCRRMCSEILVITSGEAGSRS).

It belongs to the G-protein coupled receptor 2 family. Present in the head body-wall muscles from the L1 larval stage through to adulthood. Also expressed between L4 and the adult molt in vulval vm1 muscle cells. These cells play a role in opening the vulva during egg laying.

The protein localises to the cell membrane. Functionally, not known. Putative receptor. The polypeptide is G-protein coupled receptor seb-2 (Caenorhabditis elegans).